A 132-amino-acid chain; its full sequence is Small ribosomal subunit protein uS8 (132 aa).

Belongs to the universal ribosomal protein uS8 family. Part of the 30S ribosomal subunit. Contacts proteins S5 and S12.

Functionally, one of the primary rRNA binding proteins, it binds directly to 16S rRNA central domain where it helps coordinate assembly of the platform of the 30S subunit. The polypeptide is Small ribosomal subunit protein uS8 (Xylella fastidiosa (strain M23)).